The chain runs to 111 residues: uncharacterized protein (111 aa).

Belongs to the asfivirus E111R family.

This is an uncharacterized protein from Ornithodoros (relapsing fever ticks).